We begin with the raw amino-acid sequence, 143 residues long: Antitumor antibiotic C-1027 apoprotein (143 aa).

The N-terminal stretch at 1-33 (MSLRHMSRRASRFGVVAVASIGLAAAAQSVAFA) is a signal peptide. Cystine bridges form between Cys69–Cys78 and Cys119–Cys124.

The protein belongs to the neocarzinostatin family.

In terms of biological role, binds non-covalently to a chromophore which is the cytotoxic and mutagenic component of the antibiotic. The chromophore binds to DNA as a weak intercalator and causes single- and double-strand breaks. This chain is Antitumor antibiotic C-1027 apoprotein (cagA), found in Streptomyces globisporus.